The sequence spans 208 residues: Small ribosomal subunit protein eS8 (208 aa).

Residues 1-27 (MGISRDNWHKRRKTGGKRKPYHKKRKY) are disordered. The N-myristoyl glycine moiety is linked to residue Gly2. Basic residues predominate over residues 8–26 (WHKRRKTGGKRKPYHKKRK). N6-acetyllysine is present on residues Lys37 and Lys128. The residue at position 130 (Thr130) is a Phosphothreonine. Ser160 carries the phosphoserine modification. Glycyl lysine isopeptide (Lys-Gly) (interchain with G-Cter in SUMO2) cross-links involve residues Lys170 and Lys193.

The protein belongs to the eukaryotic ribosomal protein eS8 family. Component of the small ribosomal subunit. Identified in a IGF2BP1-dependent mRNP granule complex containing untranslated mRNAs. Part of the small subunit (SSU) processome, composed of more than 70 proteins and the RNA chaperone small nucleolar RNA (snoRNA) U3.

Its subcellular location is the cytoplasm. It is found in the membrane. It localises to the nucleus. The protein resides in the nucleolus. In terms of biological role, component of the small ribosomal subunit. The ribosome is a large ribonucleoprotein complex responsible for the synthesis of proteins in the cell. Part of the small subunit (SSU) processome, first precursor of the small eukaryotic ribosomal subunit. During the assembly of the SSU processome in the nucleolus, many ribosome biogenesis factors, an RNA chaperone and ribosomal proteins associate with the nascent pre-rRNA and work in concert to generate RNA folding, modifications, rearrangements and cleavage as well as targeted degradation of pre-ribosomal RNA by the RNA exosome. In Mus musculus (Mouse), this protein is Small ribosomal subunit protein eS8 (Rps8).